Here is a 188-residue protein sequence, read N- to C-terminus: Probable manganese efflux pump MntP (188 aa).

Transmembrane regions (helical) follow at residues 3–23 (ITAT…ASIG), 66–86 (LEWN…RMII), 106–128 (WLLV…GLAF), 143–163 (ATLI…SIIG), and 168–188 (ILGG…HFHG).

This sequence belongs to the MntP (TC 9.B.29) family.

It is found in the cell inner membrane. Probably functions as a manganese efflux pump. In Shigella flexneri serotype 5b (strain 8401), this protein is Probable manganese efflux pump MntP.